We begin with the raw amino-acid sequence, 270 residues long: Formamidopyrimidine-DNA glycosylase (270 aa).

Pro-2 serves as the catalytic Schiff-base intermediate with DNA. Glu-3 (proton donor) is an active-site residue. Lys-58 acts as the Proton donor; for beta-elimination activity in catalysis. The DNA site is built by His-91, Arg-110, and Arg-151. The FPG-type zinc finger occupies 236 to 270 (FVYGRGGEFCKVCGSTLREIRLGQRASVYCPRCQR). The active-site Proton donor; for delta-elimination activity is the Arg-260.

The protein belongs to the FPG family. Monomer. Zn(2+) is required as a cofactor.

The catalysed reaction is Hydrolysis of DNA containing ring-opened 7-methylguanine residues, releasing 2,6-diamino-4-hydroxy-5-(N-methyl)formamidopyrimidine.. The enzyme catalyses 2'-deoxyribonucleotide-(2'-deoxyribose 5'-phosphate)-2'-deoxyribonucleotide-DNA = a 3'-end 2'-deoxyribonucleotide-(2,3-dehydro-2,3-deoxyribose 5'-phosphate)-DNA + a 5'-end 5'-phospho-2'-deoxyribonucleoside-DNA + H(+). Functionally, involved in base excision repair of DNA damaged by oxidation or by mutagenic agents. Acts as a DNA glycosylase that recognizes and removes damaged bases. Has a preference for oxidized purines, such as 7,8-dihydro-8-oxoguanine (8-oxoG). Has AP (apurinic/apyrimidinic) lyase activity and introduces nicks in the DNA strand. Cleaves the DNA backbone by beta-delta elimination to generate a single-strand break at the site of the removed base with both 3'- and 5'-phosphates. This Pseudomonas paraeruginosa (strain DSM 24068 / PA7) (Pseudomonas aeruginosa (strain PA7)) protein is Formamidopyrimidine-DNA glycosylase.